The sequence spans 219 residues: Imidazole glycerol phosphate synthase subunit HisH (219 aa).

Residues 4–216 (TVTVLDYGSG…VDSLPATGRN (213 aa)) form the Glutamine amidotransferase type-1 domain. The Nucleophile role is filled by cysteine 82. Active-site residues include histidine 191 and glutamate 193.

In terms of assembly, heterodimer of HisH and HisF.

It is found in the cytoplasm. The catalysed reaction is 5-[(5-phospho-1-deoxy-D-ribulos-1-ylimino)methylamino]-1-(5-phospho-beta-D-ribosyl)imidazole-4-carboxamide + L-glutamine = D-erythro-1-(imidazol-4-yl)glycerol 3-phosphate + 5-amino-1-(5-phospho-beta-D-ribosyl)imidazole-4-carboxamide + L-glutamate + H(+). It carries out the reaction L-glutamine + H2O = L-glutamate + NH4(+). Its pathway is amino-acid biosynthesis; L-histidine biosynthesis; L-histidine from 5-phospho-alpha-D-ribose 1-diphosphate: step 5/9. Functionally, IGPS catalyzes the conversion of PRFAR and glutamine to IGP, AICAR and glutamate. The HisH subunit catalyzes the hydrolysis of glutamine to glutamate and ammonia as part of the synthesis of IGP and AICAR. The resulting ammonia molecule is channeled to the active site of HisF. The polypeptide is Imidazole glycerol phosphate synthase subunit HisH (Renibacterium salmoninarum (strain ATCC 33209 / DSM 20767 / JCM 11484 / NBRC 15589 / NCIMB 2235)).